Reading from the N-terminus, the 829-residue chain is Telomere length regulation protein TEL2 homolog (829 aa).

Disordered regions lie at residues 446–493 and 620–641; these read SADF…DDLV and SEKP…PHSI. The segment covering 456-466 has biased composition (low complexity); sequence SSPSKSPLSSP. Residues 467 to 480 show a composition bias toward basic and acidic residues; that stretch reads EVREKSKVKVKADQ. Over residues 482–493 the composition is skewed to acidic residues; that stretch reads SDSDLDSDDDLV. The segment covering 629-641 has biased composition (polar residues); that stretch reads AESGSVNTDPHSI.

This sequence belongs to the TEL2 family.

The protein resides in the cytoplasm. It is found in the membrane. It localises to the nucleus. The protein localises to the chromosome. Its subcellular location is the telomere. Its function is as follows. Regulator of the DNA damage response (DDR). Part of the TTT complex that is required to stabilize protein levels of the phosphatidylinositol 3-kinase-related protein kinase (PIKK) family proteins. Promotes assembly, stabilizes and maintains the activity of TORC complexes, which regulate cell growth and survival in response to nutrient and hormonal signals. May be involved in telomere length regulation. The sequence is that of Telomere length regulation protein TEL2 homolog (telo2) from Xenopus tropicalis (Western clawed frog).